The chain runs to 242 residues: Terpene cyclase cle7 (242 aa).

7 helical membrane passes run 20 to 40, 50 to 69, 79 to 101, 117 to 137, 143 to 163, 172 to 192, and 207 to 227; these read LLLT…ITTI, GVSL…FAIL, VILR…FARS, LFVL…SVLL, FYWS…GILV, SYGM…SLFL, and ILMR…GVCF.

This sequence belongs to the paxB family.

It is found in the membrane. Its pathway is secondary metabolite biosynthesis; terpenoid biosynthesis. Its function is as follows. Non-reducing polyketide synthase; part of the cluster A that mediates the biosynthesis of chevalone E and its oxidized derivatives that possess a unique five-membered lactone ring and can synergistically enhance the cytotoxicity of doxorubicin (DOX) in breast cancer cells. Within the pathway, cle7 takes part to the biosynthesis of the molecular scaffold by catalyzing the cyclization of the prenyl group initiated by protonation and ring-opening of the epoxide to produce the chevalone E intermediate. The molecular scaffold is commonly biosynthesized by a series of enzymes including the non-reducing polyketide synthase (NR-PKS) cle1 that produces the alpha-pyrone triacetic acid lactone (TAL); The membrane-bound prenyltransferase cle5 that accepts TAL as its substrate to perform a C-3 geranylgeranylation reaction, in which the pathway-dedicated GGPS cle6 is required to provide GGPP, the other substrate of cle5; the FAD-dependent monooxygenase Cle3 that forms an (S)-epoxide ring at the terminal olefin of the geranylgeranyl group; and the terpene cyclase Cle7 that catalyzes the cyclization of the prenyl group that yields the pentacyclic pathway intermediate chevalone E. Chevalone E can derivatize into seven new oxidized analogs by the cytochrome P450 monooxygenases cle2 (acting at C-20) and cle4 (acting at C-11 and C-12). The chain is Terpene cyclase cle7 from Aspergillus versicolor.